A 571-amino-acid polypeptide reads, in one-letter code: Proline--tRNA ligase (571 aa).

The protein belongs to the class-II aminoacyl-tRNA synthetase family. ProS type 1 subfamily. As to quaternary structure, homodimer.

It is found in the cytoplasm. The catalysed reaction is tRNA(Pro) + L-proline + ATP = L-prolyl-tRNA(Pro) + AMP + diphosphate. Catalyzes the attachment of proline to tRNA(Pro) in a two-step reaction: proline is first activated by ATP to form Pro-AMP and then transferred to the acceptor end of tRNA(Pro). As ProRS can inadvertently accommodate and process non-cognate amino acids such as alanine and cysteine, to avoid such errors it has two additional distinct editing activities against alanine. One activity is designated as 'pretransfer' editing and involves the tRNA(Pro)-independent hydrolysis of activated Ala-AMP. The other activity is designated 'posttransfer' editing and involves deacylation of mischarged Ala-tRNA(Pro). The misacylated Cys-tRNA(Pro) is not edited by ProRS. This is Proline--tRNA ligase from Pseudomonas fluorescens (strain Pf0-1).